The primary structure comprises 633 residues: Proline-rich receptor-like protein kinase PERK4 (633 aa).

Positions 1–29 (MASSPESAPPTNSTSSPSPPSNTNSTTSS) are enriched in low complexity. The disordered stretch occupies residues 1–145 (MASSPESAPP…GSSGGGGGGR (145 aa)). At 1 to 151 (MASSPESAPP…GGGRSNTNTA (151 aa)) the chain is on the extracellular side. N-linked (GlcNAc...) asparagine glycans are attached at residues Asn12 and Asn24. 2 stretches are compositionally biased toward pro residues: residues 30-41 (PPAPSPPSPTPP) and 48-65 (SPPPDSTSPPAPQAPNPP). N-linked (GlcNAc...) asparagine glycosylation is present at Asn66. Gly residues predominate over residues 77–90 (QGGGGERGNGGNNG). Positions 106–135 (SRSNGDNGGSRSSPPGDTGGSRSDNPPSSG) are enriched in low complexity. Over residues 136–145 (GSSGGGGGGR) the composition is skewed to gly residues. The helical transmembrane segment at 152–172 (IIVGVLVGAGLLMIVLIIVCL) threads the bilayer. Residues 173–633 (RRKKKRKDSF…MGTKSPTPPK (461 aa)) lie on the Cytoplasmic side of the membrane. Positions 193 to 222 (QYYGNNNNNNASQNYPNWHLNSQGQNQQST) are enriched in low complexity. Positions 193–255 (QYYGNNNNNN…SMYSGPSRPV (63 aa)) are disordered. Thr273 is modified (phosphothreonine). Positions 284 to 562 (FTDANLLGQG…VRALEGEVSL (279 aa)) constitute a Protein kinase domain. ATP is bound by residues 290–298 (LGQGGFGYV) and Lys312. The residue at position 357 (Tyr357) is a Phosphotyrosine. Catalysis depends on Asp408, which acts as the Proton acceptor. Residue Ser441 is modified to Phosphoserine. 2 positions are modified to phosphothreonine: Thr442 and Thr447. Tyr455 bears the Phosphotyrosine mark. Residues 608-619 (FPVSDCEGTSSN) show a composition bias toward polar residues. Positions 608-633 (FPVSDCEGTSSNDSRDMGTKSPTPPK) are disordered.

Belongs to the protein kinase superfamily. Ser/Thr protein kinase family. In terms of tissue distribution, mostly expressed in inflorescence bolts. Also present in roots, stems, germinated seeds, cotyledons, pollen, stamen and stigma.

It is found in the cell membrane. The catalysed reaction is L-seryl-[protein] + ATP = O-phospho-L-seryl-[protein] + ADP + H(+). The enzyme catalyses L-threonyl-[protein] + ATP = O-phospho-L-threonyl-[protein] + ADP + H(+). With respect to regulation, activated by ABA and Ca(2+). In terms of biological role, required during abscisic acid (ABA)-mediated activation of Ca(2+) channels. Regulates ABA signaling pathways. Modulates the expression of genes related to cell elongation and ABA signaling during root growth. The protein is Proline-rich receptor-like protein kinase PERK4 (PERK4) of Arabidopsis thaliana (Mouse-ear cress).